The chain runs to 379 residues: Mannitol-1-phosphate 5-dehydrogenase (379 aa).

NAD(+) is bound at residue 3–14 (ALHFGAGNIGRG).

Belongs to the mannitol dehydrogenase family.

The catalysed reaction is D-mannitol 1-phosphate + NAD(+) = beta-D-fructose 6-phosphate + NADH + H(+). The polypeptide is Mannitol-1-phosphate 5-dehydrogenase (Actinobacillus pleuropneumoniae serotype 5b (strain L20)).